A 94-amino-acid polypeptide reads, in one-letter code: Aspartyl/glutamyl-tRNA(Asn/Gln) amidotransferase subunit C (94 aa).

Belongs to the GatC family. As to quaternary structure, heterotrimer of A, B and C subunits.

It catalyses the reaction L-glutamyl-tRNA(Gln) + L-glutamine + ATP + H2O = L-glutaminyl-tRNA(Gln) + L-glutamate + ADP + phosphate + H(+). It carries out the reaction L-aspartyl-tRNA(Asn) + L-glutamine + ATP + H2O = L-asparaginyl-tRNA(Asn) + L-glutamate + ADP + phosphate + 2 H(+). Its function is as follows. Allows the formation of correctly charged Asn-tRNA(Asn) or Gln-tRNA(Gln) through the transamidation of misacylated Asp-tRNA(Asn) or Glu-tRNA(Gln) in organisms which lack either or both of asparaginyl-tRNA or glutaminyl-tRNA synthetases. The reaction takes place in the presence of glutamine and ATP through an activated phospho-Asp-tRNA(Asn) or phospho-Glu-tRNA(Gln). The sequence is that of Aspartyl/glutamyl-tRNA(Asn/Gln) amidotransferase subunit C from Desulfatibacillum aliphaticivorans.